Consider the following 407-residue polypeptide: Nuclear hormone receptor family member nhr-134 (407 aa).

The segment at 11–31 (CEICGQKTSGRHFGVMSCRSC) adopts an NR C4-type zinc-finger fold. The NR C4-type; degenerate zinc-finger motif lies at 47–66 (RCPNGNCKLLENGKFKCKKC). The NR LBD domain occupies 157–407 (QFHNSLERLA…FSEPDMFEST (251 aa)).

The protein belongs to the nuclear hormone receptor family.

It is found in the nucleus. Functionally, orphan nuclear receptor. The protein is Nuclear hormone receptor family member nhr-134 (nhr-134) of Caenorhabditis elegans.